Reading from the N-terminus, the 103-residue chain is Ribonuclease VapC14 (103 aa).

The PINc domain occupies 3 to 74; sequence YVLDTNVVSA…WFDDKVLRIF (72 aa). Position 6 (D6) interacts with Mg(2+).

This sequence belongs to the PINc/VapC protein family. Requires Mg(2+) as cofactor.

Functionally, toxic component of a type II toxin-antitoxin (TA) system. An RNase. The cognate antitoxin is VapB14. The protein is Ribonuclease VapC14 (vapC14) of Mycobacterium tuberculosis (strain CDC 1551 / Oshkosh).